The sequence spans 943 residues: Isoleucine--tRNA ligase (943 aa).

The short motif at 58–68 (PYANGNIHIGH) is the 'HIGH' region element. L-isoleucyl-5'-AMP is bound at residue E567. A 'KMSKS' region motif is present at residues 608–612 (KMSKS). ATP is bound at residue K611. Residues C906, C909, C926, and C929 each contribute to the Zn(2+) site.

This sequence belongs to the class-I aminoacyl-tRNA synthetase family. IleS type 1 subfamily. In terms of assembly, monomer. It depends on Zn(2+) as a cofactor.

Its subcellular location is the cytoplasm. The enzyme catalyses tRNA(Ile) + L-isoleucine + ATP = L-isoleucyl-tRNA(Ile) + AMP + diphosphate. Its function is as follows. Catalyzes the attachment of isoleucine to tRNA(Ile). As IleRS can inadvertently accommodate and process structurally similar amino acids such as valine, to avoid such errors it has two additional distinct tRNA(Ile)-dependent editing activities. One activity is designated as 'pretransfer' editing and involves the hydrolysis of activated Val-AMP. The other activity is designated 'posttransfer' editing and involves deacylation of mischarged Val-tRNA(Ile). This chain is Isoleucine--tRNA ligase, found in Stutzerimonas stutzeri (strain A1501) (Pseudomonas stutzeri).